A 296-amino-acid chain; its full sequence is Indole-3-glycerol phosphate synthase (296 aa).

The protein belongs to the TrpC family.

The enzyme catalyses 1-(2-carboxyphenylamino)-1-deoxy-D-ribulose 5-phosphate + H(+) = (1S,2R)-1-C-(indol-3-yl)glycerol 3-phosphate + CO2 + H2O. The protein operates within amino-acid biosynthesis; L-tryptophan biosynthesis; L-tryptophan from chorismate: step 4/5. This chain is Indole-3-glycerol phosphate synthase, found in Microcystis aeruginosa (strain NIES-843 / IAM M-2473).